The chain runs to 263 residues: L-aspartate dehydrogenase (263 aa).

Residues Ala120 and Asn186 each contribute to the NAD(+) site. Residue His216 is part of the active site.

This sequence belongs to the L-aspartate dehydrogenase family.

It carries out the reaction L-aspartate + NADP(+) + H2O = oxaloacetate + NH4(+) + NADPH + H(+). It catalyses the reaction L-aspartate + NAD(+) + H2O = oxaloacetate + NH4(+) + NADH + H(+). Its pathway is cofactor biosynthesis; NAD(+) biosynthesis; iminoaspartate from L-aspartate (dehydrogenase route): step 1/1. In terms of biological role, specifically catalyzes the NAD or NADP-dependent dehydrogenation of L-aspartate to iminoaspartate. In Acinetobacter baumannii (strain AB307-0294), this protein is L-aspartate dehydrogenase.